A 377-amino-acid polypeptide reads, in one-letter code: Putative efflux system component YknX (377 aa).

A helical membrane pass occupies residues lysine 3–tyrosine 23. Residues threonine 95–glutamate 187 are a coiled coil.

The protein belongs to the membrane fusion protein (MFP) (TC 8.A.1) family. In terms of assembly, part of a complex composed of YknX, YknY and YknZ. The complex interacts with YknW.

It is found in the cell membrane. Part of an unusual four-component transporter, which is required for protection against the killing factor SdpC (sporulation-delaying protein). The polypeptide is Putative efflux system component YknX (yknX) (Bacillus subtilis (strain 168)).